Reading from the N-terminus, the 192-residue chain is Imidazoleglycerol-phosphate dehydratase (192 aa).

It belongs to the imidazoleglycerol-phosphate dehydratase family.

It localises to the cytoplasm. The enzyme catalyses D-erythro-1-(imidazol-4-yl)glycerol 3-phosphate = 3-(imidazol-4-yl)-2-oxopropyl phosphate + H2O. Its pathway is amino-acid biosynthesis; L-histidine biosynthesis; L-histidine from 5-phospho-alpha-D-ribose 1-diphosphate: step 6/9. The sequence is that of Imidazoleglycerol-phosphate dehydratase from Vesicomyosocius okutanii subsp. Calyptogena okutanii (strain HA).